A 625-amino-acid polypeptide reads, in one-letter code: Chaperone protein HtpG (625 aa).

The interval methionine 1–arginine 341 is a; substrate-binding. A b region spans residues glutamate 342 to lysine 551. The tract at residues isoleucine 552–valine 625 is c.

Belongs to the heat shock protein 90 family. Homodimer.

It localises to the cytoplasm. In terms of biological role, molecular chaperone. Has ATPase activity. This is Chaperone protein HtpG from Oceanobacillus iheyensis (strain DSM 14371 / CIP 107618 / JCM 11309 / KCTC 3954 / HTE831).